The following is a 242-amino-acid chain: Probable 2-phosphosulfolactate phosphatase (242 aa).

It belongs to the ComB family. It depends on Mg(2+) as a cofactor.

The enzyme catalyses (2R)-O-phospho-3-sulfolactate + H2O = (2R)-3-sulfolactate + phosphate. This Synechococcus sp. (strain JA-3-3Ab) (Cyanobacteria bacterium Yellowstone A-Prime) protein is Probable 2-phosphosulfolactate phosphatase.